Consider the following 599-residue polypeptide: Transcription factor COE4 (599 aa).

Residues 64–67 (RKSN) form an interaction with DNA region. The segment at 152–171 (CRVLLTHEIMCSRCCDRKSC) adopts a C5-type zinc-finger fold. 2 interaction with DNA regions span residues 198–205 (NCLKNAGN) and 237–240 (NNSK). Positions 256-339 (PCIKAISPGE…KGAPGRFVYT (84 aa)) constitute an IPT/TIG domain. 2 disordered regions span residues 449–473 (GYAR…SSYG) and 556–586 (VLRP…TDKF). A compositionally biased stretch (low complexity) spans 464–473 (SPGSQQSSYG).

The protein belongs to the COE family. As to quaternary structure, forms either a homodimer or a heterodimer with a related family member. In terms of tissue distribution, expressed in the olfactory epithelium, including in both neuronal and basal cell layers. Absent in the vomeronasal organ. Absent from NK cells and CD8(+) T cells.

The protein localises to the nucleus. Transcription factor. Positively modulates transcription, perhaps less strongly than other early B cell factor/EBF family proteins. Binds an EBF1/Olf-1 consensus site in vitro. The chain is Transcription factor COE4 (Ebf4) from Mus musculus (Mouse).